A 31-amino-acid chain; its full sequence is Cytochrome b6-f complex subunit 6 (31 aa).

The helical transmembrane segment at 4-26 threads the bilayer; that stretch reads ITSYFGFLLAALTITPALLISLN.

Belongs to the PetL family. In terms of assembly, the 4 large subunits of the cytochrome b6-f complex are cytochrome b6, subunit IV (17 kDa polypeptide, PetD), cytochrome f and the Rieske protein, while the 4 small subunits are PetG, PetL, PetM and PetN. The complex functions as a dimer.

It localises to the plastid. Its subcellular location is the chloroplast thylakoid membrane. Functionally, component of the cytochrome b6-f complex, which mediates electron transfer between photosystem II (PSII) and photosystem I (PSI), cyclic electron flow around PSI, and state transitions. PetL is important for photoautotrophic growth as well as for electron transfer efficiency and stability of the cytochrome b6-f complex. This Dioscorea elephantipes (Elephant's foot yam) protein is Cytochrome b6-f complex subunit 6.